Here is a 360-residue protein sequence, read N- to C-terminus: UDP-N-acetylglucosamine--N-acetylmuramyl-(pentapeptide) pyrophosphoryl-undecaprenol N-acetylglucosamine transferase (360 aa).

UDP-N-acetyl-alpha-D-glucosamine-binding positions include 12–14, Ser198, and Gln289; that span reads TAG.

Belongs to the glycosyltransferase 28 family. MurG subfamily.

Its subcellular location is the cell membrane. It catalyses the reaction Mur2Ac(oyl-L-Ala-gamma-D-Glu-L-Lys-D-Ala-D-Ala)-di-trans,octa-cis-undecaprenyl diphosphate + UDP-N-acetyl-alpha-D-glucosamine = beta-D-GlcNAc-(1-&gt;4)-Mur2Ac(oyl-L-Ala-gamma-D-Glu-L-Lys-D-Ala-D-Ala)-di-trans,octa-cis-undecaprenyl diphosphate + UDP + H(+). It participates in cell wall biogenesis; peptidoglycan biosynthesis. Cell wall formation. Catalyzes the transfer of a GlcNAc subunit on undecaprenyl-pyrophosphoryl-MurNAc-pentapeptide (lipid intermediate I) to form undecaprenyl-pyrophosphoryl-MurNAc-(pentapeptide)GlcNAc (lipid intermediate II). This chain is UDP-N-acetylglucosamine--N-acetylmuramyl-(pentapeptide) pyrophosphoryl-undecaprenol N-acetylglucosamine transferase, found in Streptococcus equi subsp. zooepidemicus (strain MGCS10565).